Consider the following 581-residue polypeptide: Proline--tRNA ligase (581 aa).

This sequence belongs to the class-II aminoacyl-tRNA synthetase family. ProS type 1 subfamily. As to quaternary structure, homodimer.

Its subcellular location is the cytoplasm. The catalysed reaction is tRNA(Pro) + L-proline + ATP = L-prolyl-tRNA(Pro) + AMP + diphosphate. Its function is as follows. Catalyzes the attachment of proline to tRNA(Pro) in a two-step reaction: proline is first activated by ATP to form Pro-AMP and then transferred to the acceptor end of tRNA(Pro). As ProRS can inadvertently accommodate and process non-cognate amino acids such as alanine and cysteine, to avoid such errors it has two additional distinct editing activities against alanine. One activity is designated as 'pretransfer' editing and involves the tRNA(Pro)-independent hydrolysis of activated Ala-AMP. The other activity is designated 'posttransfer' editing and involves deacylation of mischarged Ala-tRNA(Pro). The misacylated Cys-tRNA(Pro) is not edited by ProRS. This is Proline--tRNA ligase from Variovorax paradoxus (strain S110).